A 278-amino-acid chain; its full sequence is Urease accessory protein UreD (278 aa).

This sequence belongs to the UreD family. UreD, UreF and UreG form a complex that acts as a GTP-hydrolysis-dependent molecular chaperone, activating the urease apoprotein by helping to assemble the nickel containing metallocenter of UreC. The UreE protein probably delivers the nickel.

The protein resides in the cytoplasm. Required for maturation of urease via the functional incorporation of the urease nickel metallocenter. The protein is Urease accessory protein UreD of Deinococcus radiodurans (strain ATCC 13939 / DSM 20539 / JCM 16871 / CCUG 27074 / LMG 4051 / NBRC 15346 / NCIMB 9279 / VKM B-1422 / R1).